Reading from the N-terminus, the 602-residue chain is Potassium-transporting ATPase potassium-binding subunit (602 aa).

10 helical membrane-spanning segments follow: residues 3 to 23, 64 to 84, 135 to 155, 178 to 198, 282 to 302, 313 to 333, 418 to 438, 456 to 476, 522 to 542, and 565 to 585; these read ANNL…AVPV, QYAL…YALL, GLTV…LALI, LYVL…QGVI, FSNF…CLVF, VAVL…ETSA, GLYG…LMIG, VSIV…IAVL, WMTA…VLAI, and LFVV…YMPA.

The protein belongs to the KdpA family. As to quaternary structure, the system is composed of three essential subunits: KdpA, KdpB and KdpC.

Its subcellular location is the cell inner membrane. Functionally, part of the high-affinity ATP-driven potassium transport (or Kdp) system, which catalyzes the hydrolysis of ATP coupled with the electrogenic transport of potassium into the cytoplasm. This subunit binds the periplasmic potassium ions and delivers the ions to the membrane domain of KdpB through an intramembrane tunnel. In Burkholderia mallei (strain ATCC 23344), this protein is Potassium-transporting ATPase potassium-binding subunit.